The following is a 92-amino-acid chain: Small ribosomal subunit protein uS19 (92 aa).

This sequence belongs to the universal ribosomal protein uS19 family.

Its function is as follows. Protein S19 forms a complex with S13 that binds strongly to the 16S ribosomal RNA. In Halalkalibacterium halodurans (strain ATCC BAA-125 / DSM 18197 / FERM 7344 / JCM 9153 / C-125) (Bacillus halodurans), this protein is Small ribosomal subunit protein uS19 (rpsS).